Consider the following 216-residue polypeptide: Large ribosomal subunit protein uL24m (216 aa).

The N-terminal 9 residues, 1 to 9 (MRLSALLAL), are a transit peptide targeting the mitochondrion. A Phosphoserine modification is found at Ser24. The 34-residue stretch at 56 to 89 (LFCGDTVEILEGKDAGKQGKVVQVIRQRNWVVVG) folds into the KOW domain.

Belongs to the universal ribosomal protein uL24 family. Component of the mitochondrial large ribosomal subunit (mt-LSU). Mature mammalian 55S mitochondrial ribosomes consist of a small (28S) and a large (39S) subunit. The 28S small subunit contains a 12S ribosomal RNA (12S mt-rRNA) and 30 different proteins. The 39S large subunit contains a 16S rRNA (16S mt-rRNA), a copy of mitochondrial valine transfer RNA (mt-tRNA(Val)), which plays an integral structural role, and 52 different proteins.

It is found in the mitochondrion. This is Large ribosomal subunit protein uL24m (MRPL24) from Homo sapiens (Human).